Reading from the N-terminus, the 68-residue chain is MIKVIKKKSHSGLKKRIKISKKKKLLRGHAYKNHLAASKTTKQNRQLRGVTCVKLCDYNRIKTLIRGL.

The protein belongs to the bacterial ribosomal protein bL35 family.

The sequence is that of Large ribosomal subunit protein bL35 from Onion yellows phytoplasma (strain OY-M).